Here is a 503-residue protein sequence, read N- to C-terminus: MEEFQGYFELDRSRQHDFLYPLLFREYIYALAHDHGLNRSILFENAGYDKKSSSIIVKRLITRMYQQNPLIFSANDSIQNPFFGHNKNLYSQIISEGFAVIVEIPFSLRLVSSLERKEIAKSHNLRSIHSIFPFLEDKFSHLDYVSDVLIPYHIHLEISVQTLRYWVKDASSLHLLRFFLHEYWNSLITPKKHITLFSKGNPRLFLFLYNSHICEYESIFLFLRNQSSHLRSTSSGIFFERIYFYVKIEHFAKVFFDNDFQCILWFFKDPFMHYVRYQGKSILALKDTPLLMNKWKYYLVTLWQYHFYAWFQPGRIDINQLCKYSLDFLGYRSSVRLNSSVVRSQILENSFLINNAMKKFETIVPIIPLIGSLSKANFCNTLGHPISKPTRADSSDSDIIDRFLRICRNLSHYHSGSSKKKSLYRVKYILRLSCVKTLARKHKRTVRTFLKRLGSEFLEEFLTEEEVVLSLIFPRTYSTSRRLYRGQIWYFDITSINDLVNYE.

It belongs to the intron maturase 2 family. MatK subfamily.

The protein resides in the plastid. It localises to the chloroplast. Functionally, usually encoded in the trnK tRNA gene intron. Probably assists in splicing its own and other chloroplast group II introns. The sequence is that of Maturase K from Syzygium anisatum (Aniseed myrtle).